The following is a 323-amino-acid chain: Aldo-keto reductase family 1 member C3 (323 aa).

Residues 20 to 24 (GFGTY) and D50 contribute to the NADP(+) site. Y55 (proton donor) is an active-site residue. Substrate is bound at residue H117. NADP(+) is bound by residues 166–167 (SN), Q190, 216–221 (YSALGS), and 270–280 (KSYNEQRIREN).

This sequence belongs to the aldo/keto reductase family.

It is found in the cytoplasm. It carries out the reaction a 3alpha-hydroxysteroid + NADP(+) = a 3-oxosteroid + NADPH + H(+). The catalysed reaction is a 3alpha-hydroxysteroid + NAD(+) = a 3-oxosteroid + NADH + H(+). The enzyme catalyses prostaglandin F2alpha + NADP(+) = prostaglandin D2 + NADPH + H(+). It catalyses the reaction testosterone + NAD(+) = androst-4-ene-3,17-dione + NADH + H(+). It carries out the reaction testosterone + NADP(+) = androst-4-ene-3,17-dione + NADPH + H(+). The catalysed reaction is prostaglandin F2alpha + NADP(+) = prostaglandin H2 + NADPH + H(+). The enzyme catalyses prostaglandin D2 + NADPH + H(+) = 11beta-prostaglandin F2 + NADP(+). It catalyses the reaction prostaglandin D2-ethanolamide + NADPH + H(+) = 11beta-prostaglandin F2-ethanolamide + NADP(+). It carries out the reaction 17beta-estradiol + NADP(+) = estrone + NADPH + H(+). The catalysed reaction is 17beta-estradiol + NAD(+) = estrone + NADH + H(+). The enzyme catalyses (20S)-hydroxypregn-4-en-3-one + NADP(+) = progesterone + NADPH + H(+). It catalyses the reaction (20S)-hydroxypregn-4-en-3-one + NAD(+) = progesterone + NADH + H(+). It carries out the reaction 5alpha-androstane-3alpha,17beta-diol + NADP(+) = 17beta-hydroxy-5alpha-androstan-3-one + NADPH + H(+). The catalysed reaction is 5alpha-androstane-3alpha,17beta-diol + NAD(+) = 17beta-hydroxy-5alpha-androstan-3-one + NADH + H(+). The enzyme catalyses androsterone + NADPH + H(+) = 5alpha-androstane-3alpha,17beta-diol + NADP(+). It catalyses the reaction 5alpha-androstane-3alpha,17beta-diol + NAD(+) = androsterone + NADH + H(+). It carries out the reaction 5alpha-androstane-3beta,17beta-diol + NADP(+) = 17beta-hydroxy-5alpha-androstan-3-one + NADPH + H(+). The catalysed reaction is 9-cis-retinol + NADP(+) = 9-cis-retinal + NADPH + H(+). It participates in steroid metabolism. In terms of biological role, cytosolic aldo-keto reductase that catalyzes the NADH and NADPH-dependent reduction of ketosteroids to hydroxysteroids. Acts as a NAD(P)(H)-dependent 3-, 17- and 20-ketosteroid reductase on the steroid nucleus and side chain and regulates the metabolism of androgens, estrogens and progesterone. Displays the ability to catalyze both oxidation and reduction in vitro, but most probably acts as a reductase in vivo since the oxidase activity measured in vitro is inhibited by physiological concentration of NADPH. Acts preferentially as a 17-ketosteroid reductase and has the highest catalytic efficiency of the AKR1C enzyme for the reduction of delta4-androstenedione to form testosterone. Reduces prostaglandin (PG) D2 to 11beta-prostaglandin F2, progesterone to 20alpha-hydroxyprogesterone and estrone to 17beta-estradiol. Catalyzes the transformation of the potent androgen dihydrotestosterone (DHT) into the less active form, 5-alpha-androstan-3-alpha,17-beta-diol (3-alpha-diol). Also displays retinaldehyde reductase activity toward 9-cis-retinal. The protein is Aldo-keto reductase family 1 member C3 (AKR1C3) of Pongo abelii (Sumatran orangutan).